A 185-amino-acid chain; its full sequence is uncharacterized protein (185 aa).

This is an uncharacterized protein from Bacillus subtilis (strain 168).